Here is a 515-residue protein sequence, read N- to C-terminus: 2-(3-amino-3-carboxypropyl)histidine synthase subunit 2 (515 aa).

3 residues coordinate [4Fe-4S] cluster: Cys-104, Cys-125, and Cys-353. The tract at residues Gly-493–Lys-515 is disordered.

The protein belongs to the DPH1/DPH2 family. DPH2 subfamily. Component of the 2-(3-amino-3-carboxypropyl)histidine synthase complex composed of DPH1, DPH2, DPH3 and a NADH-dependent reductase, predominantly CBR1. [4Fe-4S] cluster is required as a cofactor.

The protein localises to the cytoplasm. Its pathway is protein modification; peptidyl-diphthamide biosynthesis. Its function is as follows. Required for the first step of diphthamide biosynthesis, a post-translational modification of histidine which occurs in elongation factor 2. DPH1 and DPH2 transfer a 3-amino-3-carboxypropyl (ACP) group from S-adenosyl-L-methionine (SAM) to a histidine residue, the reaction is assisted by a reduction system comprising DPH3 and a NADH-dependent reductase, predominantly CBR1. Facilitates the reduction of the catalytic iron-sulfur cluster found in the DPH1 subunit. This is 2-(3-amino-3-carboxypropyl)histidine synthase subunit 2 (DPH2) from Cryptococcus neoformans var. neoformans serotype D (strain B-3501A) (Filobasidiella neoformans).